The chain runs to 289 residues: Acetyl-coenzyme A carboxylase carboxyl transferase subunit beta (289 aa).

The CoA carboxyltransferase N-terminal domain maps to M36–E289. Residues C40, C43, C58, and C61 each contribute to the Zn(2+) site. Residues C40 to C61 form a C4-type zinc finger.

It belongs to the AccD/PCCB family. In terms of assembly, acetyl-CoA carboxylase is a heterohexamer composed of biotin carboxyl carrier protein (AccB), biotin carboxylase (AccC) and two subunits each of ACCase subunit alpha (AccA) and ACCase subunit beta (AccD). It depends on Zn(2+) as a cofactor.

The protein localises to the cytoplasm. It carries out the reaction N(6)-carboxybiotinyl-L-lysyl-[protein] + acetyl-CoA = N(6)-biotinyl-L-lysyl-[protein] + malonyl-CoA. Its pathway is lipid metabolism; malonyl-CoA biosynthesis; malonyl-CoA from acetyl-CoA: step 1/1. Its function is as follows. Component of the acetyl coenzyme A carboxylase (ACC) complex. Biotin carboxylase (BC) catalyzes the carboxylation of biotin on its carrier protein (BCCP) and then the CO(2) group is transferred by the transcarboxylase to acetyl-CoA to form malonyl-CoA. This chain is Acetyl-coenzyme A carboxylase carboxyl transferase subunit beta, found in Limosilactobacillus reuteri subsp. reuteri (strain JCM 1112) (Lactobacillus reuteri).